We begin with the raw amino-acid sequence, 184 residues long: MRPGAGANPSLPDDLVEVGYVGGAYGVRGWIKVQPHGDAEALLHASTWWLKPAAGAPAVSSDWRVLPVGTSREHSGSVVAGSPAVPDRNVAEALRGCTVWVRRAEFPAPADDEFYWVDLIGSTVVNEQQETLGTVAGLIDNGAHQILRIVDEGGTERLVPFVEVYVKSVDVAGKHIVVDWGLDY.

In terms of domain architecture, PRC barrel spans 111-184 (DDEFYWVDLI…HIVVDWGLDY (74 aa)).

It belongs to the RimM family. Binds ribosomal protein uS19.

It is found in the cytoplasm. In terms of biological role, an accessory protein needed during the final step in the assembly of 30S ribosomal subunit, possibly for assembly of the head region. Essential for efficient processing of 16S rRNA. May be needed both before and after RbfA during the maturation of 16S rRNA. It has affinity for free ribosomal 30S subunits but not for 70S ribosomes. The protein is Ribosome maturation factor RimM of Ralstonia nicotianae (strain ATCC BAA-1114 / GMI1000) (Ralstonia solanacearum).